The primary structure comprises 69 residues: Cell division protein CrgA (69 aa).

2 consecutive transmembrane segments (helical) span residues 14 to 34 (VWFP…MVLF) and 45 to 65 (AVGT…FAMM).

The protein belongs to the CrgA family.

It is found in the cell membrane. In terms of biological role, involved in cell division. The polypeptide is Cell division protein CrgA (Tropheryma whipplei (strain TW08/27) (Whipple's bacillus)).